Reading from the N-terminus, the 219-residue chain is MNKEKAIVVFSGGQDSTTCLFWAKKKYKEVIAVSFDYNQKHKLELECAKDICKKYNIEHKILDLNLLNQLAPNSLTRQDITVDKSAPKEGVPNSFVDGRNLLFLSFVAVFAKQRGINAIITGVSQSDFSGYPDCRDVFIKSLNVTLNLAMDYEFEILTPLMWINKAETWKMAYDLGVLDIVKEETLTCYNGIKADGCGECPACKLRKKGYLEFEKEYLK.

An ATP-binding site is contributed by 10-20 (FSGGQDSTTCL). The Zn(2+) site is built by cysteine 188, cysteine 197, cysteine 200, and cysteine 203.

The protein belongs to the QueC family. Homodimer. Zn(2+) is required as a cofactor.

The enzyme catalyses 7-carboxy-7-deazaguanine + NH4(+) + ATP = 7-cyano-7-deazaguanine + ADP + phosphate + H2O + H(+). It participates in purine metabolism; 7-cyano-7-deazaguanine biosynthesis. Functionally, catalyzes the ATP-dependent conversion of 7-carboxy-7-deazaguanine (CDG) to 7-cyano-7-deazaguanine (preQ(0)). This is 7-cyano-7-deazaguanine synthase from Clostridium botulinum (strain 657 / Type Ba4).